The primary structure comprises 404 residues: AT-hook motif nuclear-localized protein 6 (404 aa).

Residues 40–112 (TTVVTPLPPP…TPISSSIPLS (73 aa)) are disordered. Positions 45-55 (PLPPPPAPSSA) are enriched in pro residues. Positions 56-70 (PVPTTVTPGSATAST) are enriched in low complexity. The Bipartite nuclear localization signal signature appears at 76–84 (KKKRGRPRK). The segment at residues 76-88 (KKKRGRPRKYAPD) is a DNA-binding region (a.T hook). Low complexity predominate over residues 98-112 (PTLSPTPISSSIPLS). The PPC domain occupies 157 to 299 (GANFTTHQFT…RVMEAFAPPQ (143 aa)). The tract at residues 365–404 (AYHGYGNMNTGTTHKEEHEDEDGGDDDDDSGDTRSQSHSG) is disordered. A compositionally biased stretch (acidic residues) spans 382 to 394 (HEDEDGGDDDDDS).

It localises to the nucleus. Transcription factor that specifically binds AT-rich DNA sequences related to the nuclear matrix attachment regions (MARs). This is AT-hook motif nuclear-localized protein 6 from Arabidopsis thaliana (Mouse-ear cress).